The sequence spans 329 residues: Ketol-acid reductoisomerase (NADP(+)) (329 aa).

The KARI N-terminal Rossmann domain occupies 2 to 182 (TQLFYDTDAD…GGTRAGILET (181 aa)). NADP(+) contacts are provided by residues 25-28 (YGSQ), Ser-51, Ser-53, and 83-86 (DEFQ). Residue His-108 is part of the active site. NADP(+) is bound at residue Gly-134. The KARI C-terminal knotted domain occupies 183–328 (NFKEETETDL…KSLRSMFSWL (146 aa)). Asp-191, Glu-195, Glu-227, and Glu-231 together coordinate Mg(2+). Ser-252 serves as a coordination point for substrate.

Belongs to the ketol-acid reductoisomerase family. Requires Mg(2+) as cofactor.

It carries out the reaction (2R)-2,3-dihydroxy-3-methylbutanoate + NADP(+) = (2S)-2-acetolactate + NADPH + H(+). It catalyses the reaction (2R,3R)-2,3-dihydroxy-3-methylpentanoate + NADP(+) = (S)-2-ethyl-2-hydroxy-3-oxobutanoate + NADPH + H(+). It functions in the pathway amino-acid biosynthesis; L-isoleucine biosynthesis; L-isoleucine from 2-oxobutanoate: step 2/4. The protein operates within amino-acid biosynthesis; L-valine biosynthesis; L-valine from pyruvate: step 2/4. In terms of biological role, involved in the biosynthesis of branched-chain amino acids (BCAA). Catalyzes an alkyl-migration followed by a ketol-acid reduction of (S)-2-acetolactate (S2AL) to yield (R)-2,3-dihydroxy-isovalerate. In the isomerase reaction, S2AL is rearranged via a Mg-dependent methyl migration to produce 3-hydroxy-3-methyl-2-ketobutyrate (HMKB). In the reductase reaction, this 2-ketoacid undergoes a metal-dependent reduction by NADPH to yield (R)-2,3-dihydroxy-isovalerate. The sequence is that of Ketol-acid reductoisomerase (NADP(+)) from Prochlorococcus marinus (strain MIT 9301).